The chain runs to 105 residues: Protein Rev (105 aa).

Ser5 carries the phosphoserine; by host CK2 modification. Residues 18–26 (IIKILYQSN) form a homomultimerization region. Residues 24–35 (QSNPYPDSSQGT) are compositionally biased toward polar residues. 2 disordered regions span residues 24 to 49 (QSNP…WRAR) and 65 to 105 (LGGP…ATTE). The Nuclear localization signal and RNA-binding (RRE) signature appears at 35-51 (TRQARRNRRRRWRARQR). Over residues 37–49 (QARRNRRRRWRAR) the composition is skewed to basic residues. Residues 74-85 (LPLPPLGRLTLD) carry the Nuclear export signal and binding to XPO1 motif. Residues 95–105 (TESQQGTATTE) show a composition bias toward polar residues.

The protein belongs to the HIV-1 REV protein family. In terms of assembly, homomultimer; when bound to the RRE. Multimeric assembly is essential for activity and may involve XPO1. Binds to human KPNB1, XPO1, TNPO1, RANBP5 and IPO7. Interacts with the viral Integrase. Interacts with human KHDRBS1. Interacts with human NAP1; this interaction decreases Rev multimerization and stimulates its activity. Interacts with human DEAD-box helicases DDX3 and DDX24; these interactions may serve for viral RNA export to the cytoplasm and packaging, respectively. Interacts with human PSIP1; this interaction may inhibit HIV-1 DNA integration by promoting dissociation of the Integrase-LEDGF/p75 complex. Asymmetrically arginine dimethylated at one site by host PRMT6. Methylation impairs the RNA-binding activity and export of viral RNA from the nucleus to the cytoplasm. Post-translationally, phosphorylated by protein kinase CK2. Presence of, and maybe binding to the N-terminus of the regulatory beta subunit of CK2 is necessary for CK2-mediated Rev's phosphorylation.

It is found in the host nucleus. The protein resides in the host nucleolus. It localises to the host cytoplasm. Functionally, escorts unspliced or incompletely spliced viral pre-mRNAs (late transcripts) out of the nucleus of infected cells. These pre-mRNAs carry a recognition sequence called Rev responsive element (RRE) located in the env gene, that is not present in fully spliced viral mRNAs (early transcripts). This function is essential since most viral proteins are translated from unspliced or partially spliced pre-mRNAs which cannot exit the nucleus by the pathway used by fully processed cellular mRNAs. Rev itself is translated from a fully spliced mRNA that readily exits the nucleus. Rev's nuclear localization signal (NLS) binds directly to KPNB1/Importin beta-1 without previous binding to KPNA1/Importin alpha-1. KPNB1 binds to the GDP bound form of RAN (Ran-GDP) and targets Rev to the nucleus. In the nucleus, the conversion from Ran-GDP to Ran-GTP dissociates Rev from KPNB1 and allows Rev's binding to the RRE in viral pre-mRNAs. Rev multimerization on the RRE via cooperative assembly exposes its nuclear export signal (NES) to the surface. Rev can then form a complex with XPO1/CRM1 and Ran-GTP, leading to nuclear export of the complex. Conversion from Ran-GTP to Ran-GDP mediates dissociation of the Rev/RRE/XPO1/RAN complex, so that Rev can return to the nucleus for a subsequent round of export. Beside KPNB1, also seems to interact with TNPO1/Transportin-1, RANBP5/IPO5 and IPO7/RANBP7 for nuclear import. The nucleoporin-like HRB/RIP is an essential cofactor that probably indirectly interacts with Rev to release HIV RNAs from the perinuclear region to the cytoplasm. The protein is Protein Rev of Homo sapiens (Human).